The sequence spans 357 residues: Protein FAM118A (357 aa).

M1 carries the N-acetylmethionine modification. A helical membrane pass occupies residues 30-46 (LLLVIGTGVSAAVAPGI). At S311 the chain carries Phosphoserine.

The protein belongs to the FAM118 family.

The protein resides in the membrane. This chain is Protein FAM118A (Fam118a), found in Mus musculus (Mouse).